The sequence spans 284 residues: Tropomyosin (284 aa).

The residue at position 1 (M1) is an N-acetylmethionine. The segment at 1-42 (MDAIKKKMQAMKLEKDNAMDRADTLEQQNKEANNRAEKSEEE) is disordered. Residues 1–284 (MDAIKKKMQA…DQTFSELSGY (284 aa)) adopt a coiled-coil conformation. The segment covering 12–38 (KLEKDNAMDRADTLEQQNKEANNRAEK) has biased composition (basic and acidic residues).

It belongs to the tropomyosin family. In terms of assembly, homodimer.

Tropomyosin, in association with the troponin complex, plays a central role in the calcium dependent regulation of muscle contraction. The sequence is that of Tropomyosin from Pandalus borealis (Northern red shrimp).